A 281-amino-acid polypeptide reads, in one-letter code: Inositol diphosphatase SIW14 (281 aa).

The disordered stretch occupies residues 1 to 20; that stretch reads MGLYQAKNDEGSDPKSSSKI. Residues 7-20 show a composition bias toward basic and acidic residues; it reads KNDEGSDPKSSSKI. Ser-94 bears the Phosphoserine mark. A Tyrosine-protein phosphatase domain is found at 121-271; that stretch reads NFSHVVGEIY…YDDDEIKRIA (151 aa). Asn-189, Ile-190, and His-193 together coordinate 1D-myo-inositol hexakisphosphate. The active-site Phosphocysteine intermediate is Cys-214.

This sequence belongs to the protein-tyrosine phosphatase family. Atypical dual-specificity phosphatase Siw14-like subfamily. As to quaternary structure, monomer.

Its subcellular location is the cytoplasm. It carries out the reaction 5-diphospho-1D-myo-inositol 1,2,3,4,6-pentakisphosphate + H2O = 1D-myo-inositol hexakisphosphate + phosphate + H(+). The catalysed reaction is 5-diphospho-1D-myo-inositol 1,3,4,6-tetrakisphosphate + H2O = 1D-myo-inositol 1,3,4,5,6-pentakisphosphate + phosphate + H(+). It catalyses the reaction 3,5-bis(diphospho)-1D-myo-inositol 1,2,4,6-tetrakisphosphate + H2O = 3-diphospho-1D-myo-inositol 1,2,4,5,6-pentakisphosphate + phosphate + 2 H(+). The enzyme catalyses 1,5-bis(diphospho)-1D-myo-inositol 2,3,4,6-tetrakisphosphate + H2O = 1-diphospho-1D-myo-inositol 2,3,4,5,6-pentakisphosphate + phosphate + 2 H(+). It carries out the reaction 6-diphospho-1D-myo-inositol pentakisphosphate + H2O = 1D-myo-inositol hexakisphosphate + phosphate + H(+). Selectively cleaves the beta-phosphate at the 5-position of soluble inositol pyrophosphates. Converts 5-diphosphoinositol tetrakisphosphate (5-PP-InsP(4)) into inositol pentakisphosphate (InsP(5)), 5-diphosphoinositol pentakisphosphate (5-PP-IP(5) or 5-InsP(7)) into inositol hexakisphosphate (IP(6) or InsP(6)), and 1,5-bisdiphosphoinositol tetrakisphosphate (1,5-PP-IP(5) or InsP(8)) into 1-diphosphoinositol pentakisphosphate (1-PP-IP(5) or 1-InsP(7)). Also has activity on 1,5-bis-diphosphoinositol 2,3,4,6-tetrakisphosphate (1,5-InsP(8)) and 3,5-InsP(8). Modulates inositol pyrophosphate metabolism that may have an influence in stress response. Plays a role in actin filament organization and endocytosis. Functions as a prion suppressing factor possibly due to its phosphatase activity against inositol pyrophosphates, which are signal transduction molecules involved in prion propagation. The sequence is that of Inositol diphosphatase SIW14 (SIW14) from Saccharomyces cerevisiae (strain ATCC 204508 / S288c) (Baker's yeast).